The chain runs to 180 residues: UPF0227 protein YcfP (180 aa).

This sequence belongs to the UPF0227 family.

The sequence is that of UPF0227 protein YcfP from Salmonella choleraesuis (strain SC-B67).